The primary structure comprises 712 residues: Polyribonucleotide nucleotidyltransferase (712 aa).

Aspartate 487 and aspartate 493 together coordinate Mg(2+). A KH domain is found at 554-613 (PRIEVMNIPVDKIREVIGSGGKVIREIVEKTGAKINIEDDGTVKIASSSGKEIEAARKWI). Residues 623-691 (GQVYEGTVVK…ERGKVRLSMK (69 aa)) enclose the S1 motif domain.

It belongs to the polyribonucleotide nucleotidyltransferase family. Mg(2+) is required as a cofactor.

It localises to the cytoplasm. It carries out the reaction RNA(n+1) + phosphate = RNA(n) + a ribonucleoside 5'-diphosphate. Involved in mRNA degradation. Catalyzes the phosphorolysis of single-stranded polyribonucleotides processively in the 3'- to 5'-direction. In Rhizobium johnstonii (strain DSM 114642 / LMG 32736 / 3841) (Rhizobium leguminosarum bv. viciae), this protein is Polyribonucleotide nucleotidyltransferase.